A 346-amino-acid chain; its full sequence is Biotin synthase (346 aa).

One can recognise a Radical SAM core domain in the interval 38–256 (RQVQVSTLLS…IAVARIMMPT (219 aa)). Cysteine 53, cysteine 57, and cysteine 60 together coordinate [4Fe-4S] cluster. Cysteine 97, cysteine 128, cysteine 188, and arginine 260 together coordinate [2Fe-2S] cluster.

The protein belongs to the radical SAM superfamily. Biotin synthase family. In terms of assembly, homodimer. It depends on [4Fe-4S] cluster as a cofactor. [2Fe-2S] cluster is required as a cofactor.

It catalyses the reaction (4R,5S)-dethiobiotin + (sulfur carrier)-SH + 2 reduced [2Fe-2S]-[ferredoxin] + 2 S-adenosyl-L-methionine = (sulfur carrier)-H + biotin + 2 5'-deoxyadenosine + 2 L-methionine + 2 oxidized [2Fe-2S]-[ferredoxin]. It functions in the pathway cofactor biosynthesis; biotin biosynthesis; biotin from 7,8-diaminononanoate: step 2/2. Catalyzes the conversion of dethiobiotin (DTB) to biotin by the insertion of a sulfur atom into dethiobiotin via a radical-based mechanism. This Shigella boydii serotype 18 (strain CDC 3083-94 / BS512) protein is Biotin synthase.